The following is a 148-amino-acid chain: Large ribosomal subunit protein bL9 (148 aa).

The protein belongs to the bacterial ribosomal protein bL9 family.

Binds to the 23S rRNA. The sequence is that of Large ribosomal subunit protein bL9 from Syntrophobacter fumaroxidans (strain DSM 10017 / MPOB).